Here is a 331-residue protein sequence, read N- to C-terminus: Malate dehydrogenase (331 aa).

14–20 (GAAGSIG) contributes to the NAD(+) binding site. Positions 95 and 101 each coordinate substrate. NAD(+)-binding positions include asparagine 108, glutamine 115, and 132–134 (VGN). Substrate-binding residues include asparagine 134 and arginine 165. The active-site Proton acceptor is histidine 190.

The protein belongs to the LDH/MDH superfamily. MDH type 2 family.

The catalysed reaction is (S)-malate + NAD(+) = oxaloacetate + NADH + H(+). Functionally, catalyzes the reversible oxidation of malate to oxaloacetate. This is Malate dehydrogenase from Rhodococcus opacus (strain B4).